The chain runs to 967 residues: Isoleucine--tRNA ligase (967 aa).

Residues 68–78 (PYANGTLHMGH) carry the 'HIGH' region motif. Glu-583 serves as a coordination point for L-isoleucyl-5'-AMP. The 'KMSKS' region signature appears at 624 to 628 (KMSKS). Lys-627 lines the ATP pocket. Cys-937, Cys-940, Cys-957, and Cys-960 together coordinate Zn(2+).

This sequence belongs to the class-I aminoacyl-tRNA synthetase family. IleS type 1 subfamily. As to quaternary structure, monomer. It depends on Zn(2+) as a cofactor.

The protein resides in the cytoplasm. The catalysed reaction is tRNA(Ile) + L-isoleucine + ATP = L-isoleucyl-tRNA(Ile) + AMP + diphosphate. Functionally, catalyzes the attachment of isoleucine to tRNA(Ile). As IleRS can inadvertently accommodate and process structurally similar amino acids such as valine, to avoid such errors it has two additional distinct tRNA(Ile)-dependent editing activities. One activity is designated as 'pretransfer' editing and involves the hydrolysis of activated Val-AMP. The other activity is designated 'posttransfer' editing and involves deacylation of mischarged Val-tRNA(Ile). The sequence is that of Isoleucine--tRNA ligase from Prochlorococcus marinus (strain NATL2A).